Reading from the N-terminus, the 255-residue chain is 1-(5-phosphoribosyl)-5-[(5-phosphoribosylamino)methylideneamino] imidazole-4-carboxamide isomerase (255 aa).

The active-site Proton acceptor is the Asp8. The active-site Proton donor is the Asp129.

Belongs to the HisA/HisF family.

The protein localises to the cytoplasm. It carries out the reaction 1-(5-phospho-beta-D-ribosyl)-5-[(5-phospho-beta-D-ribosylamino)methylideneamino]imidazole-4-carboxamide = 5-[(5-phospho-1-deoxy-D-ribulos-1-ylimino)methylamino]-1-(5-phospho-beta-D-ribosyl)imidazole-4-carboxamide. Its pathway is amino-acid biosynthesis; L-histidine biosynthesis; L-histidine from 5-phospho-alpha-D-ribose 1-diphosphate: step 4/9. This chain is 1-(5-phosphoribosyl)-5-[(5-phosphoribosylamino)methylideneamino] imidazole-4-carboxamide isomerase, found in Prochlorococcus marinus (strain MIT 9211).